We begin with the raw amino-acid sequence, 1318 residues long: Meiotically up-regulated gene 79 protein (1318 aa).

Disordered stretches follow at residues 177–198 (PVNS…SGSY), 208–227 (EEEL…IVVT), and 360–387 (PQAL…PPKG). Low complexity predominate over residues 364-384 (AAAESPTTKAPTTKAPTSEAP). Positions 1049–1158 (MISYKKMVLS…WIHSLNFNAA (110 aa)) constitute a PH domain.

The protein resides in the nucleus. Its function is as follows. Appears to have a role in sporulation. The polypeptide is Meiotically up-regulated gene 79 protein (mug79) (Schizosaccharomyces pombe (strain 972 / ATCC 24843) (Fission yeast)).